The sequence spans 463 residues: MEQALSIVVLAAGKGTRMRSRYPKLLHPVGGRPMLDHVLRTAFSLEPEAVHVVHGHGAEAVQAAHADWPVRWVVQEPQLGTGHAVEQAIPAIPDDHQVLVLYGDVPLVRPETLQALLAEADGGLGLLSVDFPDPTGYGRVLRDGHGAVTGVVEHKDATAAQRRVTECNTGLLAAPAGRLKAWLQRLDNDNAQAEYYLTDVIAMAVADGVRVAAYPVADPAEVQGVNDRVQLAAAERVWQRRQAEDWMRAGVTILDPDRFDLRGHFAAGEDCRIDVGVVLEGRVELGAGVEIGPHCVLRDVALGDGTRVEAHSVLDGATAGRNCRIGPFARLRPGTDLADGAKVGNFVETKAARIGPGSKVNHLSYMGDAELGRDVNVGAGTITCNYDGHSKHRTEIGDGAFIGSGTQLVAPVRVGRGATIGAGSTVTRDAPDEALTVARSAQRSIHGWRRPGQRPDRGEGSDA.

The tract at residues 1–228 is pyrophosphorylase; the sequence is MEQALSIVVL…PAEVQGVNDR (228 aa). Residues 10 to 13, Lys24, Gln75, 80 to 81, 102 to 104, Gly138, Glu153, Asn168, and Asn226 contribute to the UDP-N-acetyl-alpha-D-glucosamine site; these read LAAG, GT, and YGD. A Mg(2+)-binding site is contributed by Asp104. A Mg(2+)-binding site is contributed by Asn226. The interval 229-249 is linker; that stretch reads VQLAAAERVWQRRQAEDWMRA. Residues 250–463 form an N-acetyltransferase region; it reads GVTILDPDRF…RPDRGEGSDA (214 aa). The UDP-N-acetyl-alpha-D-glucosamine site is built by Arg332 and Lys350. The active-site Proton acceptor is the His362. The UDP-N-acetyl-alpha-D-glucosamine site is built by Tyr365 and Asn376. Residues Ala379, 385–386, Ser404, Ala422, and Arg439 each bind acetyl-CoA; that span reads NY. The interval 437–463 is disordered; it reads VARSAQRSIHGWRRPGQRPDRGEGSDA. Basic and acidic residues predominate over residues 453 to 463; that stretch reads QRPDRGEGSDA.

It in the N-terminal section; belongs to the N-acetylglucosamine-1-phosphate uridyltransferase family. This sequence in the C-terminal section; belongs to the transferase hexapeptide repeat family. In terms of assembly, homotrimer. It depends on Mg(2+) as a cofactor.

The protein localises to the cytoplasm. The catalysed reaction is alpha-D-glucosamine 1-phosphate + acetyl-CoA = N-acetyl-alpha-D-glucosamine 1-phosphate + CoA + H(+). It catalyses the reaction N-acetyl-alpha-D-glucosamine 1-phosphate + UTP + H(+) = UDP-N-acetyl-alpha-D-glucosamine + diphosphate. The protein operates within nucleotide-sugar biosynthesis; UDP-N-acetyl-alpha-D-glucosamine biosynthesis; N-acetyl-alpha-D-glucosamine 1-phosphate from alpha-D-glucosamine 6-phosphate (route II): step 2/2. It functions in the pathway nucleotide-sugar biosynthesis; UDP-N-acetyl-alpha-D-glucosamine biosynthesis; UDP-N-acetyl-alpha-D-glucosamine from N-acetyl-alpha-D-glucosamine 1-phosphate: step 1/1. It participates in bacterial outer membrane biogenesis; LPS lipid A biosynthesis. Its function is as follows. Catalyzes the last two sequential reactions in the de novo biosynthetic pathway for UDP-N-acetylglucosamine (UDP-GlcNAc). The C-terminal domain catalyzes the transfer of acetyl group from acetyl coenzyme A to glucosamine-1-phosphate (GlcN-1-P) to produce N-acetylglucosamine-1-phosphate (GlcNAc-1-P), which is converted into UDP-GlcNAc by the transfer of uridine 5-monophosphate (from uridine 5-triphosphate), a reaction catalyzed by the N-terminal domain. This Alkalilimnicola ehrlichii (strain ATCC BAA-1101 / DSM 17681 / MLHE-1) protein is Bifunctional protein GlmU.